The chain runs to 199 residues: NAD(P)H dehydrogenase (quinone) (199 aa).

A Flavodoxin-like domain is found at valine 4 to isoleucine 190. FMN-binding positions include serine 10–isoleucine 15 and threonine 78–phenylalanine 80. NAD(+) is bound at residue tyrosine 12. Residue tryptophan 98 participates in substrate binding. Residues serine 113–glycine 119 and histidine 134 each bind FMN.

The protein belongs to the WrbA family. It depends on FMN as a cofactor.

The enzyme catalyses a quinone + NADH + H(+) = a quinol + NAD(+). The catalysed reaction is a quinone + NADPH + H(+) = a quinol + NADP(+). This Afipia carboxidovorans (strain ATCC 49405 / DSM 1227 / KCTC 32145 / OM5) (Oligotropha carboxidovorans) protein is NAD(P)H dehydrogenase (quinone).